We begin with the raw amino-acid sequence, 118 residues long: HTH-type transcriptional regulator SarT (118 aa).

A DNA-binding region (H-T-H motif) is located at residues 55-78 (MRDIISYIGIDQSRIVKSVKELSK).

Belongs to the SarA family.

Its subcellular location is the cytoplasm. Transcriptional regulator acting as an intermediary between major regulators SarA and agr and virulence genes. Represses alpha-hemolysin (hla) gene expression. This Staphylococcus aureus (strain Mu50 / ATCC 700699) protein is HTH-type transcriptional regulator SarT (sarT).